Reading from the N-terminus, the 217-residue chain is Lipoprotein CseA (217 aa).

Residues 1 to 34 (MRGLGTESLRARGALKAAIAAVAGLAVLGLSVSA) form the signal peptide. Residue cysteine 35 is the site of N-palmitoyl cysteine attachment. Residue cysteine 35 is the site of S-diacylglycerol cysteine attachment. Disordered stretches follow at residues 39 to 66 (GTGA…SPSK) and 192 to 217 (FSEE…PAPN).

It is found in the cell membrane. In terms of biological role, may be involved in the stabilization of the cell envelope or may interact with the sensor protein CseC to modulate its activity, in response to cell envelope stress. The sequence is that of Lipoprotein CseA (cseA) from Streptomyces avermitilis (strain ATCC 31267 / DSM 46492 / JCM 5070 / NBRC 14893 / NCIMB 12804 / NRRL 8165 / MA-4680).